The chain runs to 182 residues: MKLQLALVLCGLTLALGQIVPRSSWCPVPISPRMPRLMVPVRLIIIHHTVTAPCFNPHQCQLVLRQIRADHMRRKFRDIGYNFLIGGDGRIYEGLGFGIRGEHAPRYNSQSIGIAFIGNFQTGLPPSQMLQAARTLIQIAVQRRQVSPNYSVVGHCQTKATACPGIHLLNELKKWPNWRPKP.

The N-terminal stretch at 1-17 is a signal peptide; sequence MKLQLALVLCGLTLALG. One can recognise an N-acetylmuramoyl-L-alanine amidase domain in the interval 40–165; that stretch reads PVRLIIIHHT…CQTKATACPG (126 aa). Histidine 47 is a binding site for Zn(2+). Cysteine 54 and cysteine 60 are joined by a disulfide. A glycan (N-linked (GlcNAc...) asparagine) is linked at asparagine 149. Zn(2+)-binding residues include histidine 155 and cysteine 163.

It belongs to the N-acetylmuramoyl-L-alanine amidase 2 family. It depends on Zn(2+) as a cofactor.

It localises to the secreted. It catalyses the reaction Hydrolyzes the link between N-acetylmuramoyl residues and L-amino acid residues in certain cell-wall glycopeptides.. In terms of biological role, N-acetylmuramyl-L-alanine amidase involved in innate immunity by degrading bacterial peptidoglycans (PGN). Probably plays a scavenger role by digesting biologically active PGN into biologically inactive fragments. Has no direct bacteriolytic activity. The chain is Peptidoglycan-recognition protein SB2 (PGRP-SB2) from Drosophila melanogaster (Fruit fly).